Here is an 876-residue protein sequence, read N- to C-terminus: Phosphoenolpyruvate carboxylase (876 aa).

Residues His-138 and Lys-544 contribute to the active site.

It belongs to the PEPCase type 1 family. Mg(2+) serves as cofactor.

The catalysed reaction is oxaloacetate + phosphate = phosphoenolpyruvate + hydrogencarbonate. Its function is as follows. Forms oxaloacetate, a four-carbon dicarboxylic acid source for the tricarboxylic acid cycle. The sequence is that of Phosphoenolpyruvate carboxylase from Marinomonas sp. (strain MWYL1).